The sequence spans 430 residues: D-galactonate transporter (430 aa).

Over 1 to 17 (MDIPVNAAKPGRRRYLT) the chain is Cytoplasmic. The chain crosses the membrane as a helical span at residues 18-39 (LVMIFITVVICYVDRANLAVAS). D-galactonate-binding residues include tyrosine 29 and arginine 32. Residues 40–50 (AHIQEEFGITK) lie on the Periplasmic side of the membrane. Residues 51–74 (AEMGYVFSAFAWLYTLCQIPGGWF) traverse the membrane as a helical segment. D-galactonate is bound at residue tyrosine 64. Residues 75 to 81 (LDRVGSR) lie on the Cytoplasmic side of the membrane. Residues 82–100 (VTYFIAIFGWSVATLFQGF) traverse the membrane as a helical segment. Residues 101–103 (ATG) lie on the Periplasmic side of the membrane. The chain crosses the membrane as a helical span at residues 104-125 (LMSLIGLRAITGIFEAPAFPTN). Over 126–141 (NRMVTSWFPEHERASA) the chain is Cytoplasmic. The helical transmembrane segment at 142 to 164 (VGFYTSGQFVGLAFLTPLLIWIQ) threads the bilayer. Over 165–168 (EMLS) the chain is Periplasmic. The chain crosses the membrane as a helical span at residues 169 to 190 (WHWVFIVTGGIGIIWSLIWFKV). The Cytoplasmic portion of the chain corresponds to 191 to 241 (YQPPRLTKGISKAELDYIRDGGGLVDGDAPVKKEARQPLTAKDWKLVFHRK). The chain crosses the membrane as a helical span at residues 242-267 (LIGVYLGQFAVASTLWFFLTWFPNYL). Over 268–276 (TQEKGITAL) the chain is Periplasmic. A helical transmembrane segment spans residues 277 to 297 (KAGFMTTVPFLAAFVGVLLSG). Over 298-314 (WVADLLVRKGFSLGFAR) the chain is Cytoplasmic. Residues 315–333 (KTPIICGLLISTCIMGANY) form a helical membrane-spanning segment. At 334-336 (TND) the chain is on the periplasmic side. The chain crosses the membrane as a helical span at residues 337-354 (PMMIMCLMALAFFGNGFA). Residues 355 to 373 (SITWSLVSSLAPMRLIGLT) lie on the Cytoplasmic side of the membrane. D-galactonate is bound at residue tryptophan 358. The helical transmembrane segment at 374–395 (GGVFNFAGGLGGITVPLVVGYL) threads the bilayer. Over 396-400 (AQGYG) the chain is Periplasmic. The helical transmembrane segment at 401–423 (FAPALVYISAVALIGALSYILLV) threads the bilayer. Residues 424 to 430 (GDVKRVG) are Cytoplasmic-facing.

It belongs to the major facilitator superfamily. Phthalate permease family.

It localises to the cell inner membrane. The enzyme catalyses D-galactonate(in) + H(+)(in) = D-galactonate(out) + H(+)(out). Involved in D-galactonate metabolism. Catalyzes the proton-dependent uptake of galactonate into the cell. This Escherichia coli O6:H1 (strain CFT073 / ATCC 700928 / UPEC) protein is D-galactonate transporter (dgoT).